Consider the following 533-residue polypeptide: Acid-sensing ion channel 3 (533 aa).

The Cytoplasmic segment spans residues 1–19; the sequence is MKPRSGLEEAQRRQASDIR. Residues 20-40 form a helical membrane-spanning segment; that stretch reads VFASSCTMHGLGHIFGPGGLT. A Phosphothreonine; by PKC modification is found at T40. The Extracellular segment spans residues 41–435; it reads LRRGLWATAV…EQKAAYEVSE (395 aa). 7 cysteine pairs are disulfide-bonded: C93–C187, C165–C172, C283–C372, C317–C368, C321–C366, C330–C352, and C332–C344. An N-linked (GlcNAc...) asparagine glycan is attached at N176. A disordered region spans residues 286-310; that stretch reads ASLDPDDFDPEPSDPLGSPRPRPSP. N-linked (GlcNAc...) asparagine glycosylation occurs at N400. The helical transmembrane segment at 436–456 threads the bilayer; that stretch reads LLGDIGGQMGLFIGASLLTIL. Positions 449–451 match the GAS motif; ion selectivity filter motif; sequence GAS. Over 457–533 the chain is Cytoplasmic; the sequence is EILDYLCEVF…HRTCYLVTRL (77 aa). S523 bears the Phosphoserine; by PKC mark. The PDZ-binding signature appears at 530 to 533; that stretch reads VTRL.

This sequence belongs to the amiloride-sensitive sodium channel (TC 1.A.6) family. ASIC3 subfamily. As to quaternary structure, can form homotrimeric channels. Heterotrimer; forms functional heterotrimers producing channel with different properties. Forms heterotrimers with ASIC2; gives rise to a biphasic current with a sustained current which discriminates poorly between Na(+) and K(+). Interacts with STOM; inhibits ASIC3 acid-evoked current. Interacts with LIN7B (via PDZ domain); increases ASIC3 expression at the plasma membrane. Interacts with MAGI1 (via PDZ domain); probably regulates ASIC3. Interacts with GOPC (via PDZ domain); probably regulates ASIC3. Interacts with DLG4 (via PDZ domain); reduces ASIC3 expression at the plasma membrane. Post-translationally, could be phosphorylated by PKC, promoting activation of ASIC2/ASIC3 heterotrimers. In terms of tissue distribution, expressed in sciatic nerve and dorsal root ganglion (at protein level). Expressed in sensory neurons of dorsal root ganglion. Expressed in Golgi interneurons in the granular layer. Also found in superior cervical ganglia, spinal cord and brain stem.

It is found in the cell membrane. Its subcellular location is the cytoplasm. The enzyme catalyses Na(+)(in) = Na(+)(out). It catalyses the reaction K(+)(in) = K(+)(out). The catalysed reaction is Ca(2+)(in) = Ca(2+)(out). With respect to regulation, inhibited by the diuretic drug amiloride. Inhibited by gadolinium ions. Inhibited by extracellular Ca(2+). Activated by lactate. Salicylic acid, diclofenac and aspirin inhibit the sustained current component. Activated by the vertebrate neuropeptides NPFF and NPSF, and the related FMRFamide. Specifically and reversibly inhibited by the a sea anemone toxin APETx2. ASIC3-containing channels are potentiated by the cono-RFamide CNF-Tx1.1, and probably CNF-Tx1.2 and CNF-Tx1.3 (AC P0DL71). Forms pH-gated heterotrimeric sodium channels that act as postsynaptic excitatory receptors in the nervous system. Upon extracellular acidification, these channels generate a biphasic current with a fast inactivating and a slow sustained phase. ASIC3 is more sensitive to protons and gates between closed, open, and desensitized states faster than other ASICs. Displays high selectivity for sodium ions but can also permit the permeation of other cations. As a neuronal acid sensor, probably contributes to mechanoreception, acid nociception, and heat nociception. By forming heterotrimeric channels with ASIC2, generates a biphasic current with a fast inactivating and a slow sustained phase, which in sensory neurons is proposed to mediate the pain induced by acidosis that occurs in ischemic, damaged or inflamed tissues. The polypeptide is Acid-sensing ion channel 3 (Rattus norvegicus (Rat)).